The primary structure comprises 187 residues: Virulence protein ATR13 (187 aa).

An N-terminal signal peptide occupies residues 1–19 (MRLVHAVLLPGIIVFVSNG). The short motif at 38 to 41 (RQLR) is the RxLR element. The tract at residues 50-92 (LSRASFGLGKAQDPLDKFFRKIINSRKPIETSYSAKGIHEKII) is leucine heptad repeat region. Repeat copies occupy residues 93–103 (KAYDRHVFESK), 104–114 (KAHDRHVSKSK), 115–125 (KAHGRHVSKSK), and 126–136 (MAHDRHVSKSE). A 4 X 11 AA tandem repeats region spans residues 93 to 136 (KAYDRHVFESKKAHDRHVSKSKKAHGRHVSKSKMAHDRHVSKSE). A disordered region spans residues 104 to 136 (KAHDRHVSKSKKAHGRHVSKSKMAHDRHVSKSE). Residues 111–125 (SKSKKAHGRHVSKSK) show a composition bias toward basic residues. Residues 126–136 (MAHDRHVSKSE) show a composition bias toward basic and acidic residues. The segment at 137 to 187 (KAPIQYASVADYLKKIYPGTDIERIVSTLKRHDEVGAKDLGAKLQTAVASQ) is highly variable C-terminus domain.

This sequence belongs to the RxLR effector family.

It localises to the secreted. The protein localises to the host nucleus. It is found in the host nucleolus. The protein resides in the host cytoplasm. Its function is as follows. Secreted effector that acts as an elicitor of hypersensitive response (HR) specifically on plants carrying defense protein RPP13. Recognition of ATR13 by RPP13 initiates defense responses that are effective against oomycete, bacterial and viral pathogens. Due to high polymorphism, ATR13-Emoy2 does not recognize RPP13-Nd, the RPP13 defense protein from Arabidopsis thaliana ecotype Niederzenz. ATR13-Emoy2 is recognized by RPP13 variants RPP13-UKID44, RPP13-UKID65 and RPP13-UKID71. This Hyaloperonospora arabidopsidis (strain Emoy2) (Downy mildew agent) protein is Virulence protein ATR13.